Here is a 185-residue protein sequence, read N- to C-terminus: Ribosome-recycling factor (185 aa).

The protein belongs to the RRF family.

The protein resides in the cytoplasm. Responsible for the release of ribosomes from messenger RNA at the termination of protein biosynthesis. May increase the efficiency of translation by recycling ribosomes from one round of translation to another. The sequence is that of Ribosome-recycling factor from Thermobifida fusca (strain YX).